A 206-amino-acid polypeptide reads, in one-letter code: Outer-membrane lipoprotein carrier protein (206 aa).

Residues M1–A21 form the signal peptide.

It belongs to the LolA family. Monomer.

It localises to the periplasm. Participates in the translocation of lipoproteins from the inner membrane to the outer membrane. Only forms a complex with a lipoprotein if the residue after the N-terminal Cys is not an aspartate (The Asp acts as a targeting signal to indicate that the lipoprotein should stay in the inner membrane). This Shewanella sp. (strain MR-4) protein is Outer-membrane lipoprotein carrier protein.